The primary structure comprises 204 residues: RNA-free ribonuclease P (204 aa).

Belongs to the HARP family.

The catalysed reaction is Endonucleolytic cleavage of RNA, removing 5'-extranucleotides from tRNA precursor.. RNA-free RNase P that catalyzes the removal of the 5'-leader sequence from pre-tRNA to produce the mature 5'-terminus. This Pyrococcus horikoshii (strain ATCC 700860 / DSM 12428 / JCM 9974 / NBRC 100139 / OT-3) protein is RNA-free ribonuclease P.